The sequence spans 337 residues: METMRAQRLQPGVGVGGRGTLRALRPGVTGAPTSAATPPVGPPPAPPPPAPPLPPLLLAGAPGLPLPPGAAGSPAVLREAVEAVVRSFAKHTQGYGRVNVVEALQEFWQMKQSRGADLKNGALVVYEMVPSNSPPYVCYVTLPGGSCFGSFQFCPTKAEARRSAAKIALMNSVFNEHPSRRITDEFIEKSVSEALASFNGNREEADNPNTGIGAFRFMLESNKGKSMLEFQELMTVFQLLHWNGSLKAMRERQCSRQEVLAHYSHRALDDDIRHQMALDWVSREQSVPGALSRELASTERELDEARLAGKELRFHKEKKDILMLAAGQLGNMHSSSC.

The segment at 1 to 55 (METMRAQRLQPGVGVGGRGTLRALRPGVTGAPTSAATPPVGPPPAPPPPAPPLPP) is disordered. Over residues 26 to 38 (PGVTGAPTSAATP) the composition is skewed to low complexity. Pro residues predominate over residues 39-55 (PVGPPPAPPPPAPPLPP).

Belongs to the LIX1 family.

This Mus musculus (Mouse) protein is LIX1-like protein (Lix1l).